Reading from the N-terminus, the 669-residue chain is DNA ligase (669 aa).

NAD(+) contacts are provided by residues 34–38 (DAEYD), 83–84 (SL), and Glu114. Catalysis depends on Lys116, which acts as the N6-AMP-lysine intermediate. NAD(+)-binding residues include Arg137, Glu171, Lys287, and Lys311. Zn(2+)-binding residues include Cys405, Cys408, Cys423, and Cys428. The BRCT domain occupies 591–669 (NVESYFAGKT…EERFLQELNK (79 aa)).

Belongs to the NAD-dependent DNA ligase family. LigA subfamily. It depends on Mg(2+) as a cofactor. Mn(2+) serves as cofactor.

The enzyme catalyses NAD(+) + (deoxyribonucleotide)n-3'-hydroxyl + 5'-phospho-(deoxyribonucleotide)m = (deoxyribonucleotide)n+m + AMP + beta-nicotinamide D-nucleotide.. DNA ligase that catalyzes the formation of phosphodiester linkages between 5'-phosphoryl and 3'-hydroxyl groups in double-stranded DNA using NAD as a coenzyme and as the energy source for the reaction. It is essential for DNA replication and repair of damaged DNA. The polypeptide is DNA ligase (Bacillus mycoides (strain KBAB4) (Bacillus weihenstephanensis)).